A 221-amino-acid polypeptide reads, in one-letter code: Max dimerization protein 1 (221 aa).

Residues 21 to 49 carry the Nuclear localization signal motif; that stretch reads RREREAEHGYASMLPYNSKERDGLKRKSK. Disordered stretches follow at residues 29–67 and 178–221; these read GYAS…EKNR and SSSS…SIAL. Positions 55–107 constitute a bHLH domain; it reads SSRSTHNEMEKNRRAHLRLCLEKLKMLVPLGPESNRHTTLSLLMRAKLHIKKL. Polar residues predominate over residues 193–221; that stretch reads MQSICSDEGYSSSGLKSIGLQNNPKSIAL.

Heterodimer with MAX; the interaction is required for DNA-binding. DNA binding requires dimerization with another bHLH protein; does not form homodimers, and does not bind to DNA in the absence of MAX in vitro. As to expression, expressed primarily in cells that have undergone terminal differentiation including notochord, floor plate and cement gland.

Its subcellular location is the nucleus. Component of a transcriptional repressor complex together with MAX. In complex with MAX binds to the core DNA sequence 5'-CAC[GA]TG-3'. Antagonizes MYC transcriptional activity by competing with MYC for MAX binding. Binds to the TERT promoter and represses telomerase expression, possibly by interfering with MYC binding. This chain is Max dimerization protein 1 (mxd1), found in Xenopus laevis (African clawed frog).